A 287-amino-acid polypeptide reads, in one-letter code: MSNSAKLIDVITKVALPIGIIASGIQYSMYDVKGGSRGVIFDRINGVKQQVVGEGTHFLVPWLQKAIIYDVRTKPKSIATNTGTKDLQMVSLTLRVLHRPEVLQLPAIYQNLGLDYDERVLPSIGNEVLKSIVAQFDAAELITQREIISQKIRKELSTRANEFGIKLEDVSITHMTFGPEFTKAVEQKQIAQQDAERAKFLVEKAEQERQASVIRAEGEAESAEFISKALAKVGDGLLLIRRLEASKDIAQTLANSSNVVYLPSQHSGGGNSESSGSPNSLLLNIGR.

Positions 102 to 116 are interaction with ATG8; sequence VLQLPAIYQNLGLDY. The short motif at 109–112 is the AIM element; it reads YQNL. The stretch at 180–224 forms a coiled coil; sequence EFTKAVEQKQIAQQDAERAKFLVEKAEQERQASVIRAEGEAESAE. A disordered region spans residues 264–287; that stretch reads SQHSGGGNSESSGSPNSLLLNIGR. Residues 272–287 show a composition bias toward low complexity; the sequence is SESSGSPNSLLLNIGR.

Belongs to the prohibitin family. The mitochondrial prohibitin complex consists of two subunits (PHB1 and PHB2). The subunits assemble into a membrane-associated ring-shaped supercomplex of approximately 1 mDa. The mitochondrial prohibitin complex interacts with the m-AAA protease, a heterohexamer composed of YTA12/RCA1 and YTA10/AFG3. The mitochondrial prohibitin complex interacts with ATG8 and the interaction may support mitophagosome assembly. In terms of processing, the N-terminus is blocked.

The protein resides in the mitochondrion inner membrane. Functionally, prohibitin probably acts as a holdase/unfoldase for the stabilization of newly synthesized mitochondrial proteins. Involved in mitophagy; may act as an adapter for ATG8 that supports mitophagosome assembly. Negatively regulates the proteolytic processing of ATG32 via the i-AAA protease. Acts as a negative regulator of the m-AAA protease. This chain is Prohibitin-1 (PHB1), found in Saccharomyces cerevisiae (strain ATCC 204508 / S288c) (Baker's yeast).